The chain runs to 239 residues: Small ribosomal subunit protein uS2 (239 aa).

This sequence belongs to the universal ribosomal protein uS2 family.

The protein is Small ribosomal subunit protein uS2 of Histophilus somni (strain 129Pt) (Haemophilus somnus).